Reading from the N-terminus, the 444-residue chain is Maltoporin (444 aa).

An N-terminal signal peptide occupies residues 1-24; it reads MITLRKVPLALAIAAGILSAQAGA.

It belongs to the porin LamB (TC 1.B.3) family. Homotrimer formed of three 18-stranded antiparallel beta-barrels, containing three independent channels.

It localises to the cell outer membrane. It carries out the reaction beta-maltose(in) = beta-maltose(out). Its function is as follows. Involved in the transport of maltose and maltodextrins. This Enterobacter sp. (strain 638) protein is Maltoporin.